Here is a 336-residue protein sequence, read N- to C-terminus: uncharacterized protein (336 aa).

It to bacterial alkanal monooxygenase alpha and beta chains.

This is an uncharacterized protein from Bacillus subtilis (strain 168).